A 235-amino-acid chain; its full sequence is Phosphoribosylaminoimidazole-succinocarboxamide synthase (235 aa).

Belongs to the SAICAR synthetase family.

The catalysed reaction is 5-amino-1-(5-phospho-D-ribosyl)imidazole-4-carboxylate + L-aspartate + ATP = (2S)-2-[5-amino-1-(5-phospho-beta-D-ribosyl)imidazole-4-carboxamido]succinate + ADP + phosphate + 2 H(+). Its pathway is purine metabolism; IMP biosynthesis via de novo pathway; 5-amino-1-(5-phospho-D-ribosyl)imidazole-4-carboxamide from 5-amino-1-(5-phospho-D-ribosyl)imidazole-4-carboxylate: step 1/2. The polypeptide is Phosphoribosylaminoimidazole-succinocarboxamide synthase (Clostridium beijerinckii (strain ATCC 51743 / NCIMB 8052) (Clostridium acetobutylicum)).